The primary structure comprises 104 residues: UPF0145 protein VIBHAR_02090 (104 aa).

The protein belongs to the UPF0145 family.

This chain is UPF0145 protein VIBHAR_02090, found in Vibrio campbellii (strain ATCC BAA-1116).